A 161-amino-acid polypeptide reads, in one-letter code: NADH-quinone oxidoreductase subunit C (161 aa).

Belongs to the complex I 30 kDa subunit family. NDH-1 is composed of 14 different subunits. Subunits NuoB, C, D, E, F, and G constitute the peripheral sector of the complex.

It localises to the cell inner membrane. The enzyme catalyses a quinone + NADH + 5 H(+)(in) = a quinol + NAD(+) + 4 H(+)(out). Its function is as follows. NDH-1 shuttles electrons from NADH, via FMN and iron-sulfur (Fe-S) centers, to quinones in the respiratory chain. The immediate electron acceptor for the enzyme in this species is believed to be ubiquinone. Couples the redox reaction to proton translocation (for every two electrons transferred, four hydrogen ions are translocated across the cytoplasmic membrane), and thus conserves the redox energy in a proton gradient. This chain is NADH-quinone oxidoreductase subunit C, found in Citrifermentans bemidjiense (strain ATCC BAA-1014 / DSM 16622 / JCM 12645 / Bem) (Geobacter bemidjiensis).